Reading from the N-terminus, the 95-residue chain is uncharacterized protein (95 aa).

Positions 1–21 are cleaved as a signal peptide; sequence MKKITLFFTALLCLFSTSVLA.

This is an uncharacterized protein from Haemophilus influenzae (strain ATCC 51907 / DSM 11121 / KW20 / Rd).